Consider the following 258-residue polypeptide: MSAYPKSYNPFDDDGEDEGARPAPWRDARDLPDGPDAPADRQQYLRQEVLRRAEATAASTSRSLALMYESEKVGVASSEELARQRGVLERTEKMVDKMDQDLKISQKHINSIKSVFGGLVNYFKSKPVETPPEQNGTLASQPNSRLKEAISSSKEQEAKYQASHPNLRRLDDTDPVPRGAGSAVSTDAYPKNPHLQAYHQKIDSNLDELSVGLGRLKDIALGMQTEIEEQDDILDRLTTKVDKLDVNIKSTERKVRQL.

The segment at 1 to 41 (MSAYPKSYNPFDDDGEDEGARPAPWRDARDLPDGPDAPADR) is disordered. Over residues 18 to 32 (EGARPAPWRDARDLP) the composition is skewed to basic and acidic residues. The stretch at 76-107 (ASSEELARQRGVLERTEKMVDKMDQDLKISQK) forms a coiled coil. 3 positions are modified to phosphoserine: Ser-77, Ser-78, and Ser-114. The segment at 127–190 (PVETPPEQNG…GSAVSTDAYP (64 aa)) is disordered. A phosphothreonine mark is found at Thr-130 and Thr-137. Residues 132 to 144 (PEQNGTLASQPNS) are compositionally biased toward polar residues. Residues Ser-163, Ser-182, Ser-185, Ser-204, and Ser-210 each carry the phosphoserine modification. Residues 196–258 (QAYHQKIDSN…KSTERKVRQL (63 aa)) form the t-SNARE coiled-coil homology domain.

This sequence belongs to the SNAP-25 family. As to quaternary structure, forms a SNARE complex, composed of VAMP8, SNAP29 and STX17, involved in fusion of autophagosome with lysosome. Interacts with multiple syntaxins including STX6. Interacts with EIPR1. Interacts with STX17; this interaction is increased in the absence of TMEM39A.

It localises to the cytoplasm. The protein localises to the golgi apparatus membrane. Its subcellular location is the cytoplasmic vesicle. The protein resides in the autophagosome membrane. It is found in the cell projection. It localises to the cilium membrane. SNAREs, soluble N-ethylmaleimide-sensitive factor-attachment protein receptors, are essential proteins for fusion of cellular membranes. SNAREs localized on opposing membranes assemble to form a trans-SNARE complex, an extended, parallel four alpha-helical bundle that drives membrane fusion. SNAP29 is a SNARE involved in autophagy through the direct control of autophagosome membrane fusion with the lysososome membrane. Also plays a role in ciliogenesis by regulating membrane fusions. This Pongo abelii (Sumatran orangutan) protein is Synaptosomal-associated protein 29.